Consider the following 94-residue polypeptide: MLQSNEYFSGKVKSIGFTSSSTGRASVGVMVEGEYLFSTAEPEEMTVISGALNVLLPEATEWQVYQAGQVFNVPGHSEFHLQVAEPTSYLCRYL.

This sequence belongs to the nucleoside phosphorylase PpnP family.

It carries out the reaction a purine D-ribonucleoside + phosphate = a purine nucleobase + alpha-D-ribose 1-phosphate. The catalysed reaction is adenosine + phosphate = alpha-D-ribose 1-phosphate + adenine. It catalyses the reaction cytidine + phosphate = cytosine + alpha-D-ribose 1-phosphate. The enzyme catalyses guanosine + phosphate = alpha-D-ribose 1-phosphate + guanine. It carries out the reaction inosine + phosphate = alpha-D-ribose 1-phosphate + hypoxanthine. The catalysed reaction is thymidine + phosphate = 2-deoxy-alpha-D-ribose 1-phosphate + thymine. It catalyses the reaction uridine + phosphate = alpha-D-ribose 1-phosphate + uracil. The enzyme catalyses xanthosine + phosphate = alpha-D-ribose 1-phosphate + xanthine. Catalyzes the phosphorolysis of diverse nucleosides, yielding D-ribose 1-phosphate and the respective free bases. Can use uridine, adenosine, guanosine, cytidine, thymidine, inosine and xanthosine as substrates. Also catalyzes the reverse reactions. The chain is Pyrimidine/purine nucleoside phosphorylase from Escherichia fergusonii (strain ATCC 35469 / DSM 13698 / CCUG 18766 / IAM 14443 / JCM 21226 / LMG 7866 / NBRC 102419 / NCTC 12128 / CDC 0568-73).